We begin with the raw amino-acid sequence, 399 residues long: Guanine nucleotide-binding protein G(f) subunit alpha (399 aa).

Residues 46-399 (TTVKILLLGT…SENVSSMGLF (354 aa)) form the G-alpha domain. Residues 49–62 (KILLLGTAESGKTT) form a G1 motif region. GTP is bound by residues 54–61 (GTAESGKT), 188–194 (LHSRKIT), 221–225 (DVGGQ), 290–293 (NKYD), and Ala371. Positions 186–194 (DILHSRKIT) are G2 motif. Thr194 serves as a coordination point for Mg(2+). Positions 217–226 (FQMYDVGGQR) are G3 motif. The segment at 286–293 (IVFLNKYD) is G4 motif. Residues 369 to 374 (TVATDT) form a G5 motif region.

The protein belongs to the G-alpha family. As to quaternary structure, g proteins are composed of 3 units; alpha, beta and gamma. The alpha chain contains the guanine nucleotide binding site. In terms of tissue distribution, during embryogenesis, expressed primarily in the developing gut and transiently in the amnioserosa.

Its function is as follows. Guanine nucleotide-binding proteins (G proteins) are involved as modulators or transducers in various transmembrane signaling systems. In Drosophila melanogaster (Fruit fly), this protein is Guanine nucleotide-binding protein G(f) subunit alpha (Galphaf).